The primary structure comprises 442 residues: Protein trichome birefringence-like 26 (442 aa).

The helical; Signal-anchor for type II membrane protein transmembrane segment at 51-71 threads the bilayer; sequence FFLYFSLVALAYYFIISSLAV. The short motif at 164–166 is the GDS motif element; sequence GDS. Residues 409–423 carry the DCXHWCLPGXXDXWN motif motif; it reads DCLHWCLPGPIDSWN.

Belongs to the PC-esterase family. TBL subfamily.

It localises to the membrane. Functionally, may be involved in the O-acetylation of mannan. May act as a bridging protein that binds pectin and other cell wall polysaccharides. Probably involved in maintaining esterification of pectins. This Arabidopsis thaliana (Mouse-ear cress) protein is Protein trichome birefringence-like 26 (TBL26).